Reading from the N-terminus, the 287-residue chain is Thymidylate synthase (287 aa).

R21 serves as a coordination point for dUMP. Residue N51 coordinates (6R)-5,10-methylene-5,6,7,8-tetrahydrofolate. 150 to 151 (RR) contributes to the dUMP binding site. The Nucleophile role is filled by C170. DUMP is bound by residues 190-193 (RSGD), N201, and 231-233 (HIY). Residue D193 participates in (6R)-5,10-methylene-5,6,7,8-tetrahydrofolate binding. Position 286 (A286) interacts with (6R)-5,10-methylene-5,6,7,8-tetrahydrofolate.

It belongs to the thymidylate synthase family. Bacterial-type ThyA subfamily. In terms of assembly, homodimer.

It is found in the cytoplasm. It catalyses the reaction dUMP + (6R)-5,10-methylene-5,6,7,8-tetrahydrofolate = 7,8-dihydrofolate + dTMP. The protein operates within pyrimidine metabolism; dTTP biosynthesis. In terms of biological role, catalyzes the reductive methylation of 2'-deoxyuridine-5'-monophosphate (dUMP) to 2'-deoxythymidine-5'-monophosphate (dTMP) while utilizing 5,10-methylenetetrahydrofolate (mTHF) as the methyl donor and reductant in the reaction, yielding dihydrofolate (DHF) as a by-product. This enzymatic reaction provides an intracellular de novo source of dTMP, an essential precursor for DNA biosynthesis. This is Thymidylate synthase from Mycoplasma genitalium (strain ATCC 33530 / DSM 19775 / NCTC 10195 / G37) (Mycoplasmoides genitalium).